The sequence spans 186 residues: Threonylcarbamoyl-AMP synthase (186 aa).

A YrdC-like domain is found at 5-186; sequence LLTIKAAAKL…WEAQTQKRLR (182 aa).

It belongs to the SUA5 family. TsaC subfamily.

The protein resides in the cytoplasm. It carries out the reaction L-threonine + hydrogencarbonate + ATP = L-threonylcarbamoyladenylate + diphosphate + H2O. Its function is as follows. Required for the formation of a threonylcarbamoyl group on adenosine at position 37 (t(6)A37) in tRNAs that read codons beginning with adenine. Catalyzes the conversion of L-threonine, HCO(3)(-)/CO(2) and ATP to give threonylcarbamoyl-AMP (TC-AMP) as the acyladenylate intermediate, with the release of diphosphate. This Hydrogenovibrio crunogenus (strain DSM 25203 / XCL-2) (Thiomicrospira crunogena) protein is Threonylcarbamoyl-AMP synthase.